The primary structure comprises 403 residues: S-adenosylmethionine synthase (403 aa).

His-17 contributes to the ATP binding site. Mg(2+) is bound at residue Asp-19. A K(+)-binding site is contributed by Glu-45. L-methionine-binding residues include Glu-58 and Gln-104. The flexible loop stretch occupies residues 104 to 114 (QSSDIAQGVNT). ATP is bound by residues 179 to 181 (DGK), 250 to 251 (KF), Asp-259, 265 to 266 (RK), Ala-282, and Lys-286. Asp-259 contacts L-methionine. Position 290 (Lys-290) interacts with L-methionine.

The protein belongs to the AdoMet synthase family. In terms of assembly, homotetramer; dimer of dimers. Mg(2+) is required as a cofactor. K(+) serves as cofactor.

It localises to the cytoplasm. The enzyme catalyses L-methionine + ATP + H2O = S-adenosyl-L-methionine + phosphate + diphosphate. It functions in the pathway amino-acid biosynthesis; S-adenosyl-L-methionine biosynthesis; S-adenosyl-L-methionine from L-methionine: step 1/1. Functionally, catalyzes the formation of S-adenosylmethionine (AdoMet) from methionine and ATP. The overall synthetic reaction is composed of two sequential steps, AdoMet formation and the subsequent tripolyphosphate hydrolysis which occurs prior to release of AdoMet from the enzyme. The protein is S-adenosylmethionine synthase of Mycobacterium leprae (strain Br4923).